The chain runs to 522 residues: Cytochrome bd-I ubiquinol oxidase subunit 1 (522 aa).

The residue at position 1 (Met-1) is an N-formylmethionine. Over 1-22 (MLDIVELSRLQFALTAMYHFLF) the chain is Cytoplasmic. His-19 provides a ligand contact to heme b. The chain crosses the membrane as a helical span at residues 23–42 (VPLTLGMAFLLAIMETVYVL). At 43-94 (SGKQIYKDMTKFWGKLFGINFALGVATGLTMEFQFGTNWSYYSHYVGDIFGA) the chain is on the periplasmic side. Residues 95-114 (PLAIEGLMAFFLESTFVGLF) form a helical membrane-spanning segment. Over 115–129 (FFGWDRLGKVQHMCV) the chain is Cytoplasmic. A helical transmembrane segment spans residues 130-149 (TWLVALGSNLSALWILVANG). Over 150–187 (WMQNPIASDFNFETMRMEMVSFSELVLNPVAQVKFVHT) the chain is Periplasmic. Residue His-186 coordinates heme b. Residues 188–207 (VASGYVTGAMFILGISAWYM) form a helical membrane-spanning segment. Topologically, residues 208–219 (LKGRDFAFAKRS) are cytoplasmic. Residues 220-239 (FAIAASFGMAAVLSVIVLGD) traverse the membrane as a helical segment. Over 240 to 392 (ESGYEMGDVQ…VAPLYFAFRI (153 aa)) the chain is Periplasmic. Met-393 provides a ligand contact to heme b. The chain crosses the membrane as a helical span at residues 393–412 (MVACGFLLLAIIALSFWSVI). The Cytoplasmic portion of the chain corresponds to 413 to 470 (RNRIGEKKWLLRAALYGIPLPWIAVEAGWFVAEYGRQPWAIGEVLPTAVANSSLTAGD). A helical transmembrane segment spans residues 471–490 (LIFSMVLICGLYTLFLVAEL). The Periplasmic portion of the chain corresponds to 491-522 (FLMFKFARLGPSSLKTGRYHFEQSSTTTQPAR).

This sequence belongs to the cytochrome ubiquinol oxidase subunit 1 family. As to quaternary structure, heterodimer of subunits I and II. Requires heme b as cofactor. Heme d cis-diol is required as a cofactor.

Its subcellular location is the cell inner membrane. The catalysed reaction is 2 a ubiquinol + O2(in) + 4 H(+)(in) = 2 a ubiquinone + 2 H2O(in) + 4 H(+)(out). Its pathway is energy metabolism; oxidative phosphorylation. A terminal oxidase that produces a proton motive force by the vectorial transfer of protons across the inner membrane. It is the component of the aerobic respiratory chain of E.coli that predominates when cells are grown at low aeration. Generates a proton motive force using protons and electrons from opposite sides of the membrane to generate H(2)O, transferring 1 proton/electron. The protein is Cytochrome bd-I ubiquinol oxidase subunit 1 (cydA) of Escherichia coli O6:H1 (strain CFT073 / ATCC 700928 / UPEC).